The sequence spans 992 residues: UPF0182 protein RHA1_ro06389 (992 aa).

7 helical membrane passes run Val-18–Ser-38, Leu-63–Leu-83, Leu-114–Ser-134, Trp-174–Gly-194, Val-211–Asp-231, Lys-260–Leu-280, and Met-288–Val-308. The tract at residues Thr-904–Ser-948 is disordered. Residues Ala-908–Ala-934 are compositionally biased toward low complexity.

The protein belongs to the UPF0182 family.

The protein resides in the cell membrane. This is UPF0182 protein RHA1_ro06389 from Rhodococcus jostii (strain RHA1).